The sequence spans 81 residues: Putative membrane protein insertion efficiency factor (81 aa).

This sequence belongs to the UPF0161 family.

The protein resides in the cell inner membrane. Its function is as follows. Could be involved in insertion of integral membrane proteins into the membrane. This Pseudomonas syringae pv. syringae (strain B728a) protein is Putative membrane protein insertion efficiency factor.